We begin with the raw amino-acid sequence, 105 residues long: Nucleoid-associated protein OCAR_7544/OCA5_c05960 (105 aa).

Belongs to the YbaB/EbfC family. Homodimer.

It is found in the cytoplasm. The protein resides in the nucleoid. Binds to DNA and alters its conformation. May be involved in regulation of gene expression, nucleoid organization and DNA protection. The sequence is that of Nucleoid-associated protein OCAR_7544/OCA5_c05960 from Afipia carboxidovorans (strain ATCC 49405 / DSM 1227 / KCTC 32145 / OM5) (Oligotropha carboxidovorans).